The following is a 314-amino-acid chain: MTQTLPAGLTVTARVPASSANLGPGFDTLGIALGLYDEITVTTTASGLNIRVEGEGADDVPWGPSHLVVRAIERGLESAGVWADGLDVVCRNVIPHSRGLGSSASAVVGGLAAANGLAIKLDPELGLSLDQLVQLSSEFEGHPDNASASVLGGAVVSWSCAGEQADGAPAATDIYSAVALKVHPAIRVVALVPGERSSTAHTRGLLPETVPHRDAAFNVSRGALAVVALTERPDLLMAATEDRLHQTQRAPALPLTTRWIAVLRKAGIAATVSGAGPTVLALTTEPFPVELRAQAEAEGLQVLELDVADGVRTS.

Residue 95–105 (PHSRGLGSSAS) participates in ATP binding.

It belongs to the GHMP kinase family. Homoserine kinase subfamily.

It localises to the cytoplasm. It carries out the reaction L-homoserine + ATP = O-phospho-L-homoserine + ADP + H(+). Its pathway is amino-acid biosynthesis; L-threonine biosynthesis; L-threonine from L-aspartate: step 4/5. In terms of biological role, catalyzes the ATP-dependent phosphorylation of L-homoserine to L-homoserine phosphate. This Rhodococcus opacus (strain B4) protein is Homoserine kinase.